Consider the following 112-residue polypeptide: T cell receptor alpha variable 7 (112 aa).

The signal sequence occupies residues 1-21 (MEKMRRPVLIIFCLCLGWANG). Positions 22–112 (ENQVEHSPHF…DSATYFCAVD (91 aa)) constitute an Ig-like domain. A disulfide bridge connects residues Cys-44 and Cys-109. 2 N-linked (GlcNAc...) asparagine glycosylation sites follow: Asn-84 and Asn-90.

In terms of assembly, alpha-beta TR is a heterodimer composed of an alpha and beta chain; disulfide-linked. The alpha-beta TR is associated with the transmembrane signaling CD3 coreceptor proteins to form the TR-CD3 (TcR or TCR). The assembly of alpha-beta TR heterodimers with CD3 occurs in the endoplasmic reticulum where a single alpha-beta TR heterodimer associates with one CD3D-CD3E heterodimer, one CD3G-CD3E heterodimer and one CD247 homodimer forming a stable octameric structure. CD3D-CD3E and CD3G-CD3E heterodimers preferentially associate with TR alpha and TR beta chains, respectively. The association of the CD247 homodimer is the last step of TcR assembly in the endoplasmic reticulum and is required for transport to the cell surface.

The protein localises to the cell membrane. V region of the variable domain of T cell receptor (TR) alpha chain that participates in the antigen recognition. Alpha-beta T cell receptors are antigen specific receptors which are essential to the immune response and are present on the cell surface of T lymphocytes. Recognize peptide-major histocompatibility (MH) (pMH) complexes that are displayed by antigen presenting cells (APC), a prerequisite for efficient T cell adaptive immunity against pathogens. Binding of alpha-beta TR to pMH complex initiates TR-CD3 clustering on the cell surface and intracellular activation of LCK that phosphorylates the ITAM motifs of CD3G, CD3D, CD3E and CD247 enabling the recruitment of ZAP70. In turn ZAP70 phosphorylates LAT, which recruits numerous signaling molecules to form the LAT signalosome. The LAT signalosome propagates signal branching to three major signaling pathways, the calcium, the mitogen-activated protein kinase (MAPK) kinase and the nuclear factor NF-kappa-B (NF-kB) pathways, leading to the mobilization of transcription factors that are critical for gene expression and essential for T cell growth and differentiation. The T cell repertoire is generated in the thymus, by V-(D)-J rearrangement. This repertoire is then shaped by intrathymic selection events to generate a peripheral T cell pool of self-MH restricted, non-autoaggressive T cells. Post-thymic interaction of alpha-beta TR with the pMH complexes shapes TR structural and functional avidity. This chain is T cell receptor alpha variable 7, found in Homo sapiens (Human).